A 465-amino-acid chain; its full sequence is MDVLKITGGIPLKGQVKAAGAKNAMTKLLVASLLSDKKCTFYNVPNIGDVEVTVSLCQEIGMEVRWDRAAGIMEVITKELKTSYIPQRFSGSNRIPILMIGALLGRTDQDIIVPTAGGCPIGQRPVDFHIQALEQLGAVIEYRGMKREGAYFAHAHNGLKGTLITLPYPSVGATENTILAGITARGVTVIKNAAIEPEIVELILFLQKLGAIITIDVDRTIRIQGTRRFYEVEHTVIPDRIEAASWGMAAISSKGKVFVEGAQHLNMITFLNKLREVGGGFDVRSNGIEFFYDGPLQGGLHLETDVHPGFMTDWQQPFVVLLTQSSGTSVVHETVYENRFGYTDTLKEMGADITPFRQCLGGKSCRFASQSFSHSAIIKGATPLVGKEIRIPDLRAGFAYIMAALIANDTSTISGLPFIQRGYENFIGKLADLGANVSLVEEEKNVKEMPENSSKLPLFAELQVN.

Residue 22 to 23 (KN) coordinates phosphoenolpyruvate. A UDP-N-acetyl-alpha-D-glucosamine-binding site is contributed by R94. Residue C119 is the Proton donor of the active site. C119 is subject to 2-(S-cysteinyl)pyruvic acid O-phosphothioketal. UDP-N-acetyl-alpha-D-glucosamine-binding residues include D313 and V335.

It belongs to the EPSP synthase family. MurA subfamily.

It localises to the cytoplasm. The enzyme catalyses phosphoenolpyruvate + UDP-N-acetyl-alpha-D-glucosamine = UDP-N-acetyl-3-O-(1-carboxyvinyl)-alpha-D-glucosamine + phosphate. It functions in the pathway cell wall biogenesis; peptidoglycan biosynthesis. Its function is as follows. Cell wall formation. Adds enolpyruvyl to UDP-N-acetylglucosamine. This is UDP-N-acetylglucosamine 1-carboxyvinyltransferase from Protochlamydia amoebophila (strain UWE25).